The primary structure comprises 319 residues: ATP-dependent 6-phosphofructokinase (319 aa).

G11 lines the ATP pocket. 21–25 (RAVVR) serves as a coordination point for ADP. Residues 72-73 (RY) and 102-105 (GDGS) contribute to the ATP site. Position 103 (D103) interacts with Mg(2+). Position 125-127 (125-127 (TID)) interacts with substrate. D127 (proton acceptor) is an active-site residue. R154 serves as a coordination point for ADP. Substrate-binding positions include R162 and 169 to 171 (MGR). ADP is bound by residues 185–187 (GAE), R211, and 213–215 (KKH). Substrate contacts are provided by residues E222, R243, and 249–252 (HVQR).

The protein belongs to the phosphofructokinase type A (PFKA) family. ATP-dependent PFK group I subfamily. Prokaryotic clade 'B1' sub-subfamily. Homotetramer. Requires Mg(2+) as cofactor.

The protein localises to the cytoplasm. It carries out the reaction beta-D-fructose 6-phosphate + ATP = beta-D-fructose 1,6-bisphosphate + ADP + H(+). It participates in carbohydrate degradation; glycolysis; D-glyceraldehyde 3-phosphate and glycerone phosphate from D-glucose: step 3/4. Its activity is regulated as follows. Allosterically activated by ADP and other diphosphonucleosides, and allosterically inhibited by phosphoenolpyruvate. Its function is as follows. Catalyzes the phosphorylation of D-fructose 6-phosphate to fructose 1,6-bisphosphate by ATP, the first committing step of glycolysis. The protein is ATP-dependent 6-phosphofructokinase of Listeria innocua serovar 6a (strain ATCC BAA-680 / CLIP 11262).